Here is a 478-residue protein sequence, read N- to C-terminus: Dihydrolipoyl dehydrogenase (478 aa).

FAD-binding positions include 34–49 (EKYI…GGTC), Lys58, and Gly122. Residues Cys49 and Cys54 are joined by a disulfide bond. Residues 188-192 (GAGVI), Glu211, Val245, and 276-279 (AVGR) each bind NAD(+). Residues Asp319 and Ala327 each coordinate FAD. The active-site Proton acceptor is the His451.

This sequence belongs to the class-I pyridine nucleotide-disulfide oxidoreductase family. As to quaternary structure, homodimer. Requires FAD as cofactor.

The protein resides in the cytoplasm. The catalysed reaction is N(6)-[(R)-dihydrolipoyl]-L-lysyl-[protein] + NAD(+) = N(6)-[(R)-lipoyl]-L-lysyl-[protein] + NADH + H(+). Its function is as follows. The branched-chain alpha-keto dehydrogenase complex catalyzes the overall conversion of alpha-keto acids to acyl-CoA and CO(2). It contains multiple copies of 3 enzymatic components: branched-chain alpha-keto acid decarboxylase (E1), lipoamide acyltransferase (E2) and lipoamide dehydrogenase (E3). In terms of biological role, also acts in the glycine cleavage system. The sequence is that of Dihydrolipoyl dehydrogenase (lpdG) from Pseudomonas aeruginosa (strain ATCC 15692 / DSM 22644 / CIP 104116 / JCM 14847 / LMG 12228 / 1C / PRS 101 / PAO1).